We begin with the raw amino-acid sequence, 621 residues long: Very-long-chain aldehyde decarbonylase GL1-5 (621 aa).

Transmembrane regions (helical) follow at residues 99–119 (IILSGILLYLGALYVPGGQHL), 126–146 (GAGLIALLHAGPVEFLYYWFH), 186–206 (LLFSIPLIACALTGTASIIAF), 224–244 (FELVPSWLFTWFPPLKYLMYT), and 332–352 (MWPLSWLSMVLTWTYGSSFTV). Residues 138–272 (VEFLYYWFHR…MPFYDYIYNT (135 aa)) enclose the Fatty acid hydroxylase domain.

Belongs to the sterol desaturase family. As to quaternary structure, homodimer. Expressed in panicles, developing spikelets, stamens and hulls and, at low levels, in roots, developing seeds, flag leaves and seedling shoots. Strongly expressed in the epidermal cells of anthers.

The protein resides in the endoplasmic reticulum membrane. It catalyses the reaction a long-chain fatty aldehyde + 2 NADPH + O2 + H(+) = a long-chain alkane + formate + 2 NADP(+) + H2O. Functionally, aldehyde decarbonylase involved in the conversion of aldehydes to alkanes. Core component of a very-long-chain alkane synthesis complex. Required for the biosynthesis of very-long-chain fatty acids (including polyesters) in cuticles, anther tapetum and pollen exine. The sequence is that of Very-long-chain aldehyde decarbonylase GL1-5 from Oryza sativa subsp. japonica (Rice).